We begin with the raw amino-acid sequence, 453 residues long: Tubulin alpha-1/2/3 chain (453 aa).

Residue Gln11 coordinates GTP. Lys40 carries the N6-acetyllysine modification. 7 residues coordinate GTP: Glu71, Ser140, Gly144, Thr145, Thr179, Asn206, and Asn228. Mg(2+) is bound at residue Glu71. Glu254 is an active-site residue. Residues 429–453 (EKDYEEVGTESQEGDGEEGEDGGDQ) are disordered. The segment covering 431–453 (DYEEVGTESQEGDGEEGEDGGDQ) has biased composition (acidic residues).

Belongs to the tubulin family. As to quaternary structure, dimer of alpha and beta chains. A typical microtubule is a hollow water-filled tube with an outer diameter of 25 nm and an inner diameter of 15 nM. Alpha-beta heterodimers associate head-to-tail to form protofilaments running lengthwise along the microtubule wall with the beta-tubulin subunit facing the microtubule plus end conferring a structural polarity. Microtubules usually have 13 protofilaments but different protofilament numbers can be found in some organisms and specialized cells. Requires Mg(2+) as cofactor. In terms of processing, acetylation of alpha chains at Lys-40 stabilizes microtubules and affects affinity and processivity of microtubule motors. This modification has a role in multiple cellular functions, ranging from cell motility, cell cycle progression or cell differentiation to intracellular trafficking and signaling.

Its subcellular location is the cytoplasm. The protein resides in the cytoskeleton. The enzyme catalyses GTP + H2O = GDP + phosphate + H(+). Tubulin is the major constituent of microtubules, a cylinder consisting of laterally associated linear protofilaments composed of alpha- and beta-tubulin heterodimers. Microtubules grow by the addition of GTP-tubulin dimers to the microtubule end, where a stabilizing cap forms. Below the cap, tubulin dimers are in GDP-bound state, owing to GTPase activity of alpha-tubulin. This is Tubulin alpha-1/2/3 chain (TBA1) from Naegleria gruberi (Amoeba).